The sequence spans 68 residues: Adipokinetic prohormone type 1 (68 aa).

An N-terminal signal peptide occupies residues 1 to 20; the sequence is MNKIYFVIVFVACFCLFAEA. Pyrrolidone carboxylic acid is present on Gln-21. Gly-30 is modified (glycine amide). Residues 34–68 constitute a propeptide that is removed on maturation; sequence SGVAPMSCKNEEAVATIFKLIQNEAERFIICQQKS.

In terms of tissue distribution, expressed in antennal lobe (AL), corpora cardiaca (CC), corpora allata (CA) and gnathal ganglion (GNG) (at protein level). Expression in CC and CA detected in all animals, expression in GNG in some animals and in AL in few animals (at protein level).

It localises to the secreted. In terms of biological role, this hormone, released from cells in the corpora cardiaca, causes release of diglycerides from the fat body and stimulation of muscles to use these diglycerides as an energy source during energy-demanding processes. This chain is Adipokinetic prohormone type 1, found in Agrotis ipsilon (Black cutworm moth).